A 344-amino-acid polypeptide reads, in one-letter code: tRNA (guanine(26)-N(2))-dimethyltransferase (344 aa).

The region spanning 1–334 (MIVREGSAEI…ASCDLVESLM (334 aa)) is the Trm1 methyltransferase domain. Positions 35, 60, and 76 each coordinate S-adenosyl-L-methionine.

The protein belongs to the class I-like SAM-binding methyltransferase superfamily. Trm1 family.

The catalysed reaction is guanosine(26) in tRNA + 2 S-adenosyl-L-methionine = N(2)-dimethylguanosine(26) in tRNA + 2 S-adenosyl-L-homocysteine + 2 H(+). In terms of biological role, dimethylates a single guanine residue at position 26 of a number of tRNAs using S-adenosyl-L-methionine as donor of the methyl groups. This Thermoplasma acidophilum (strain ATCC 25905 / DSM 1728 / JCM 9062 / NBRC 15155 / AMRC-C165) protein is tRNA (guanine(26)-N(2))-dimethyltransferase.